Consider the following 123-residue polypeptide: MNTMITFLVLFVLTAANGAPEANERKIPEAIHNEDQSLAEMAEELMFFLQQTEFEAPLLQEEEEAEXAEXRNSRERRCAMGDVPCTKGKTNCCKGYECKPKSPAWWYDTDFCQSIHSGRPIGI.

Positions 1–18 are cleaved as a signal peptide; it reads MNTMITFLVLFVLTAANG. A propeptide spanning residues 19–77 is cleaved from the precursor; that stretch reads APEANERKIPEAIHNEDQSLAEMAEELMFFLQQTEFEAPLLQEEEEAEXAEXRNSRERR. 3 disulfide bridges follow: C78–C93, C85–C98, and C92–C112.

This sequence belongs to the neurotoxin 14 (magi-1) family. 05 (ICK-7) subfamily. ICK-7 sub-subfamily. Expressed by the venom gland.

It is found in the secreted. Ion channel inhibitor. This Trittame loki (Brush-footed trapdoor spider) protein is U9-barytoxin-Tl1a.